Here is a 327-residue protein sequence, read N- to C-terminus: Ribose operon repressor (327 aa).

The 56-residue stretch at 1–56 folds into the HTH lacI-type domain; sequence MTTIKQVALEAGVSKSTVSRFIAQNGYVSDEAREKIERAIKKLNFRPNLSAQSLKT. A DNA-binding region (H-T-H motif) is located at residues 4-23; the sequence is IKQVALEAGVSKSTVSRFIA.

Transcriptional repressor for the ribose rbsDACBK operon. This chain is Ribose operon repressor (rbsR), found in Lactococcus lactis subsp. lactis (strain IL1403) (Streptococcus lactis).